The sequence spans 352 residues: Heavy metal-associated isoprenylated plant protein 36 (352 aa).

The region spanning 29–92 (YTTWVLRVSI…KIMKAGRHAE (64 aa)) is the HMA domain. The a metal cation site is built by cysteine 40 and cysteine 43. 3 disordered regions span residues 96 to 150 (TSME…GNFD), 162 to 211 (QLQP…GPPE), and 229 to 252 (PHLH…RHHP). Residues 97–107 (SMENNINNDCN) show a composition bias toward polar residues. Positions 118-128 (ETSGDEDDDEN) are enriched in acidic residues. Over residues 133-148 (NGGGDVGGGGGGGGGN) the composition is skewed to gly residues. Residues 172-183 (KKKKKKKKKKKS) are compositionally biased toward basic residues. Gly residues predominate over residues 192–203 (EGGGGGGGGGGP). Residue cysteine 349 is modified to Cysteine methyl ester. Cysteine 349 carries the S-farnesyl cysteine lipid modification. The propeptide at 350 to 352 (CVM) is removed in mature form.

Belongs to the HIPP family.

Functionally, heavy-metal-binding protein. This chain is Heavy metal-associated isoprenylated plant protein 36, found in Arabidopsis thaliana (Mouse-ear cress).